Reading from the N-terminus, the 137-residue chain is Sch210972 biosynthesis cluster protein E (137 aa).

The span at 1–12 (MTKYTSVNSSLP) shows a compositional bias: polar residues. Residues 1 to 137 (MTKYTSVNSS…ASTIRPPCCG (137 aa)) form a disordered region. The segment covering 15 to 27 (PRQTTPTRPATQT) has biased composition (low complexity). Positions 51 to 71 (GSLNGSPTLRTTLDTSLSGTR) are enriched in polar residues. The segment covering 94–109 (DEDHPHDPGPDSDAKK) has biased composition (basic and acidic residues).

Its pathway is secondary metabolite biosynthesis. Its function is as follows. Part of the gene cluster that mediates the biosynthesis of the tetramic acid Sch210972, a potential anti-HIV fungal natural product that contains a decalin core. The PKS module of cghG together with the enoylreductase cghC catalyze the formation of the polyketide unit which is then conjugated to 4-hydroxyl-4-methyl glutamate (HMG) by the condensation domain of the cghG NRPS module. One unique structural feature of Sch210972 is the tetramic acid motif proposed to be derived from the non-proteinogenic amino acid HMG, by a Dieckmann-type condensation catalyzed by the reductase domain of cghG. The aldolase cghB catalyzes the aldol condensation of 2 molecules of pyruvic acid to yield the intermediate 4-hydroxyl-4-methyl-2-oxoglutarate (HMOG), which can then be stereoselectively transaminated by an unidentified enzyme to form HMG. The Diels-Alderase cghA then uses the Dieckmann product released by cghG as substrate and catalyzes the Diels-Alder cycloaddition to form the decalin ring of Sch210972. CghA also suppresses the nonenzymatic formation of the alternative stereoisomer. The polypeptide is Sch210972 biosynthesis cluster protein E (Chaetomium globosum (strain ATCC 6205 / CBS 148.51 / DSM 1962 / NBRC 6347 / NRRL 1970) (Soil fungus)).